The sequence spans 529 residues: 3-ketoacyl-CoA synthase 20 (529 aa).

A disordered region spans residues 1 to 22 (MSHNQNQPHRPVPVHVTNAEPN). The next 2 membrane-spanning stretches (helical) occupy residues 52–72 (LYIL…SFTI) and 84–104 (FHFL…TAYF). The FAE domain occupies 103–396 (YFTTRPRRVF…FFATLVARKV (294 aa)). Catalysis depends on residues Cys-247, His-326, His-415, His-419, and Asn-452.

The protein belongs to the thiolase-like superfamily. Chalcone/stilbene synthases family. In terms of tissue distribution, expressed in aerial organs. Expressed in leaves, flowers, siliques and stems. Expressed in roots, young seedlings, leaves, flowers and siliques.

Its subcellular location is the membrane. The catalysed reaction is a very-long-chain acyl-CoA + malonyl-CoA + H(+) = a very-long-chain 3-oxoacyl-CoA + CO2 + CoA. The protein operates within lipid metabolism; fatty acid biosynthesis. Inhibited by K3 herbicides such as alachlor, allidochlor, anilofos, cafenstrole, fentrazamide and flufenacet. Strongly inhibited by metazachlor and only slightly by mefluidide. Its function is as follows. Mediates the synthesis of VLCFAs from 22 to 26 carbons in length (e.g. C22, C24, C26). Functionally redundant with KCS2 in the two-carbon elongation of C22 fatty acids that is required for cuticular wax and root suberin biosynthesis. The chain is 3-ketoacyl-CoA synthase 20 from Arabidopsis thaliana (Mouse-ear cress).